The sequence spans 279 residues: MTELTRIPLAGVIGLPIAHSRSPALHGYWLKRYGLKGHYIPMDVAQADLRDVLAAMPRMGFVGCNVTIPHKESVIGLADIVTDRAALIGAANTLIFRKDGKIHADNTDGTGFTANLRQNAPAWQPQSGPAVVWGAGGAARAVIAALIEVGVPEIRLANRSRARADALRSDFGAKVHVHDWVQAGNILEDAVTVVNTTSLGMVGKPEFRVPLDALNPKAVVTDLVYAPLRTRLLVEAEAAGCRTVDGLGMLLHQAAPGFERWFGVRPEVDEETRAAVLAT.

Residues 20 to 22 (SRS) and threonine 67 each bind shikimate. The Proton acceptor role is filled by lysine 71. Aspartate 83 serves as a coordination point for NADP(+). Asparagine 92 and aspartate 108 together coordinate shikimate. NADP(+) contacts are provided by residues 134–138 (GAGGA) and leucine 223. Tyrosine 225 contacts shikimate. Glycine 246 is a binding site for NADP(+).

Belongs to the shikimate dehydrogenase family. As to quaternary structure, homodimer.

The catalysed reaction is shikimate + NADP(+) = 3-dehydroshikimate + NADPH + H(+). It participates in metabolic intermediate biosynthesis; chorismate biosynthesis; chorismate from D-erythrose 4-phosphate and phosphoenolpyruvate: step 4/7. Its function is as follows. Involved in the biosynthesis of the chorismate, which leads to the biosynthesis of aromatic amino acids. Catalyzes the reversible NADPH linked reduction of 3-dehydroshikimate (DHSA) to yield shikimate (SA). In Cereibacter sphaeroides (strain KD131 / KCTC 12085) (Rhodobacter sphaeroides), this protein is Shikimate dehydrogenase (NADP(+)).